A 21-amino-acid chain; its full sequence is Fibrinogen beta chain (21 aa).

At glutamine 1 the chain carries Pyrrolidone carboxylic acid. Residues glutamine 1 to aspartate 11 are compositionally biased toward acidic residues. Residues glutamine 1–arginine 21 are disordered. O-linked (GalNAc...) threonine glycosylation occurs at threonine 4. Sulfotyrosine is present on tyrosine 6. Residues aspartate 12–arginine 21 are compositionally biased toward basic and acidic residues.

In terms of assembly, heterohexamer; disulfide linked. Contains 2 sets of 3 non-identical chains (alpha, beta and gamma). The 2 heterotrimers are in head to head conformation with the N-termini in a small central domain. Conversion of fibrinogen to fibrin is triggered by thrombin, which cleaves fibrinopeptides A and B from alpha and beta chains, and thus exposes the N-terminal polymerization sites responsible for the formation of the soft clot.

Its subcellular location is the secreted. Functionally, cleaved by the protease thrombin to yield monomers which, together with fibrinogen alpha (FGA) and fibrinogen gamma (FGG), polymerize to form an insoluble fibrin matrix. Fibrin has a major function in hemostasis as one of the primary components of blood clots. In addition, functions during the early stages of wound repair to stabilize the lesion and guide cell migration during re-epithelialization. Was originally thought to be essential for platelet aggregation, based on in vitro studies using anticoagulated blood. However subsequent studies have shown that it is not absolutely required for thrombus formation in vivo. Enhances expression of SELP in activated platelets. Maternal fibrinogen is essential for successful pregnancy. Fibrin deposition is also associated with infection, where it protects against IFNG-mediated hemorrhage. May also facilitate the antibacterial immune response via both innate and T-cell mediated pathways. This Muntiacus muntjak (Barking deer) protein is Fibrinogen beta chain (FGB).